The primary structure comprises 178 residues: Deoxycytidylate deaminase (178 aa).

Residues Glu-14–Phe-145 enclose the CMP/dCMP-type deaminase domain. Residue His-84 coordinates Zn(2+). Glu-86 serves as the catalytic Proton donor. Positions 110 and 113 each coordinate Zn(2+). Position 174 is a phosphoserine (Ser-174).

This sequence belongs to the cytidine and deoxycytidylate deaminase family. Homohexamer. The cofactor is Zn(2+).

The catalysed reaction is dCMP + H2O + H(+) = dUMP + NH4(+). It catalyses the reaction 5-hydroxymethyl-dCMP + H2O + H(+) = 5-hydroxymethyl-dUMP + NH4(+). Allosteric enzyme whose activity is greatly influenced by the end products of its metabolic pathway, dCTP and dTTP. In terms of biological role, catalyzes the deamination of dCMP to dUMP, providing the nucleoside monophosphate substrate for the thymidylate synthase/TYMS. Also, part of a nucleotide salvage pathway that eliminates epigenetically modified 5-hydroxymethyl-dCMP (hmdCMP) in a two-step process entailing deamination to cytotoxic 5-hydroxymethyl-dUMP (hmdUMP), followed by its hydrolysis into 5-hydroxymethyluracil (hmU) and 2-deoxy-D-ribose 5-phosphate (deoxyribosephosphate). Catalyzes the first step in that pathway, the deamination of 5-hydroxymethyl-dCMP (hmdCMP). The sequence is that of Deoxycytidylate deaminase from Homo sapiens (Human).